A 158-amino-acid chain; its full sequence is Large ribosomal subunit protein uL22 (158 aa).

Belongs to the universal ribosomal protein uL22 family. Part of the 50S ribosomal subunit.

In terms of biological role, this protein binds specifically to 23S rRNA. It makes multiple contacts with different domains of the 23S rRNA in the assembled 50S subunit and ribosome. The globular domain of the protein is located near the polypeptide exit tunnel on the outside of the subunit, while an extended beta-hairpin is found that lines the wall of the exit tunnel in the center of the 70S ribosome. This Haloquadratum walsbyi (strain DSM 16790 / HBSQ001) protein is Large ribosomal subunit protein uL22.